The primary structure comprises 325 residues: CRISPR-associated endonuclease Cas1 3 (325 aa).

The Mn(2+) site is built by E152, H217, and E232.

It belongs to the CRISPR-associated endonuclease Cas1 family. In terms of assembly, homodimer, forms a heterotetramer with a Cas2 homodimer. It depends on Mg(2+) as a cofactor. Requires Mn(2+) as cofactor.

Its function is as follows. CRISPR (clustered regularly interspaced short palindromic repeat), is an adaptive immune system that provides protection against mobile genetic elements (viruses, transposable elements and conjugative plasmids). CRISPR clusters contain spacers, sequences complementary to antecedent mobile elements, and target invading nucleic acids. CRISPR clusters are transcribed and processed into CRISPR RNA (crRNA). Acts as a dsDNA endonuclease. Involved in the integration of spacer DNA into the CRISPR cassette. This is CRISPR-associated endonuclease Cas1 3 from Thermodesulfovibrio yellowstonii (strain ATCC 51303 / DSM 11347 / YP87).